The following is a 90-amino-acid chain: Small ribosomal subunit protein uS19 (90 aa).

The protein belongs to the universal ribosomal protein uS19 family.

Functionally, protein S19 forms a complex with S13 that binds strongly to the 16S ribosomal RNA. This Hydrogenovibrio crunogenus (strain DSM 25203 / XCL-2) (Thiomicrospira crunogena) protein is Small ribosomal subunit protein uS19.